A 128-amino-acid polypeptide reads, in one-letter code: Protein yippee-like At3g08990 (128 aa).

The region spanning 12-109 (LVYSCKYCQT…LERFKVLGPY (98 aa)) is the Yippee domain. 4 residues coordinate Zn(2+): Cys-16, Cys-19, Cys-72, and Cys-75.

This sequence belongs to the yippee family.

The polypeptide is Protein yippee-like At3g08990 (Arabidopsis thaliana (Mouse-ear cress)).